A 198-amino-acid polypeptide reads, in one-letter code: Glycerol-3-phosphate acyltransferase (198 aa).

5 helical membrane passes run 5–25, 56–76, 84–104, 114–134, and 158–178; these read LILLSLLAYVIGSIPSGLWIG, SIVTVMDILKGTVATLLPFFF, FWLLTGAFAIIGHSFPLFAGF, AGVILAYAPLLFVAALIIFLL, and LFMGDWILIILIACITLFVVW.

It belongs to the PlsY family. In terms of assembly, probably interacts with PlsX.

Its subcellular location is the cell membrane. It catalyses the reaction an acyl phosphate + sn-glycerol 3-phosphate = a 1-acyl-sn-glycero-3-phosphate + phosphate. The protein operates within lipid metabolism; phospholipid metabolism. In terms of biological role, catalyzes the transfer of an acyl group from acyl-phosphate (acyl-PO(4)) to glycerol-3-phosphate (G3P) to form lysophosphatidic acid (LPA). This enzyme utilizes acyl-phosphate as fatty acyl donor, but not acyl-CoA or acyl-ACP. The chain is Glycerol-3-phosphate acyltransferase from Listeria welshimeri serovar 6b (strain ATCC 35897 / DSM 20650 / CCUG 15529 / CIP 8149 / NCTC 11857 / SLCC 5334 / V8).